The primary structure comprises 272 residues: Ribosomal RNA large subunit methyltransferase E (272 aa).

Residues Gly-50, Trp-52, Asp-68, Asp-84, and Asp-109 each coordinate S-adenosyl-L-methionine. Lys-149 functions as the Proton acceptor in the catalytic mechanism. The region spanning Pro-196 to Glu-254 is the TRAM domain.

The protein belongs to the class I-like SAM-binding methyltransferase superfamily. RNA methyltransferase RlmE family.

It is found in the cytoplasm. It catalyses the reaction uridine(2552) in 23S rRNA + S-adenosyl-L-methionine = 2'-O-methyluridine(2552) in 23S rRNA + S-adenosyl-L-homocysteine + H(+). Functionally, specifically methylates the uridine in position 2552 of 23S rRNA at the 2'-O position of the ribose in the fully assembled 50S ribosomal subunit. This Methanosarcina acetivorans (strain ATCC 35395 / DSM 2834 / JCM 12185 / C2A) protein is Ribosomal RNA large subunit methyltransferase E.